The chain runs to 22 residues: Melittin-like peptide (22 aa).

A Glutamine amide modification is found at Q22.

In terms of tissue distribution, expressed by the skin dorsal glands.

It localises to the secreted. This is Melittin-like peptide from Rana temporaria (European common frog).